Consider the following 1442-residue polypeptide: DNA-binding protein RFX7 (1442 aa).

The disordered stretch occupies residues 1–36 (MEEEQQQQQQQQQAQKMQGTEQSAQLPPSAPGALPA). Positions 112–187 (AFSWIRNTLE…YCYSGLRKKA (76 aa)) form a DNA-binding region, RFX-type winged-helix. The short motif at 192–197 (PSLPNL) is the PxLPxI/L motif element. 3 disordered regions span residues 406-426 (MQSV…GDRS), 485-514 (SAGT…KNGS), and 929-1001 (SVTP…SVPP). A compositionally biased stretch (pro residues) spans 935–947 (TPTPTPTPTPTLT). A compositionally biased stretch (polar residues) spans 957–995 (GTQSLSRESPCSRLAQTTPVDSALGSSRHTPVGTPHSNC).

This sequence belongs to the RFX family.

It localises to the nucleus. Transcription factor. Acts as a transcriptional activator by binding to promoter regions of target genes. Plays a role in natural killer (NK) cell maintenance and immunity. Plays a role in the process of ciliogenesis in the neural tube and neural tube closure by regulating the expression of RFX4. This is DNA-binding protein RFX7 from Xenopus laevis (African clawed frog).